A 231-amino-acid polypeptide reads, in one-letter code: NADH-ubiquinone oxidoreductase chain 4 (231 aa).

The next 6 membrane-spanning stretches (helical) occupy residues 1-21 (PIAG…YGII), 34-54 (MFLP…LTCL), 63-85 (IAYS…TPWG), 89-111 (ALAL…NTTY), 128-148 (ILPM…AIPP), and 169-189 (TIIM…HMFL).

Belongs to the complex I subunit 4 family.

The protein resides in the mitochondrion membrane. The catalysed reaction is a ubiquinone + NADH + 5 H(+)(in) = a ubiquinol + NAD(+) + 4 H(+)(out). Its function is as follows. Core subunit of the mitochondrial membrane respiratory chain NADH dehydrogenase (Complex I) that is believed to belong to the minimal assembly required for catalysis. Complex I functions in the transfer of electrons from NADH to the respiratory chain. The immediate electron acceptor for the enzyme is believed to be ubiquinone. The chain is NADH-ubiquinone oxidoreductase chain 4 (MT-ND4) from Bothrocophias hyoprora (Amazonian hognose viper).